A 445-amino-acid chain; its full sequence is Neuropeptide Y receptor type 5 (445 aa).

Residues 1–42 (MEFKLEEHFNKTFVTENNTAAARNAAFPAWEDYRGSVDDLQY) lie on the Extracellular side of the membrane. N-linked (GlcNAc...) asparagine glycans are attached at residues asparagine 10 and asparagine 17. The helical transmembrane segment at 43 to 63 (FLIGLYTFVSLLGFMGNLLIL) threads the bilayer. The Cytoplasmic portion of the chain corresponds to 64-77 (MAVMKKRNQKTTVN). A helical membrane pass occupies residues 78-98 (FLIGNLAFSDILVVLFCSPFT). Topologically, residues 99-117 (LTSVLLDQWMFGKAMCHIM) are extracellular. Residues cysteine 114 and cysteine 198 are joined by a disulfide bond. Residues 118 to 138 (PFLQCVSVLVSTLILISIAIV) form a helical membrane-spanning segment. Topologically, residues 139-156 (RYHMIKHPISNNLTANHG) are cytoplasmic. The chain crosses the membrane as a helical span at residues 157–177 (YFLIATVWTLGFAICSPLPVF). Over 178–208 (HSLVELKETFGSALLSSKYLCVESWPSDSYR) the chain is Extracellular. A helical transmembrane segment spans residues 209–229 (IAFTISLLLVQYILPLVCLTV). At 230–368 (SHTSVCRSIS…KKRSRSVFYR (139 aa)) the chain is on the cytoplasmic side. Residues 369 to 389 (LTILILVFAVSWMPLHVFHVV) traverse the membrane as a helical segment. Residues 390 to 406 (TDFNDNLISNRHFKLVY) are Extracellular-facing. Residues 407 to 427 (CICHLLGMMSCCLNPILYGFL) traverse the membrane as a helical segment. Residues 428–445 (NNGIKADLRALIHCLHMS) are Cytoplasmic-facing. The S-palmitoyl cysteine moiety is linked to residue cysteine 441.

It belongs to the G-protein coupled receptor 1 family. Brain; hypothalamus.

The protein resides in the cell membrane. In terms of biological role, receptor for neuropeptide Y and peptide YY. The activity of this receptor is mediated by G proteins that inhibit adenylate cyclase activity. Seems to be associated with food intake. Could be involved in feeding disorders. This is Neuropeptide Y receptor type 5 (Npy5r) from Rattus norvegicus (Rat).